The primary structure comprises 265 residues: tRNA pseudouridine synthase A (265 aa).

The active-site Nucleophile is D58. Substrate is bound at residue Y116.

The protein belongs to the tRNA pseudouridine synthase TruA family. In terms of assembly, homodimer.

It catalyses the reaction uridine(38/39/40) in tRNA = pseudouridine(38/39/40) in tRNA. Its function is as follows. Formation of pseudouridine at positions 38, 39 and 40 in the anticodon stem and loop of transfer RNAs. This Neisseria meningitidis serogroup C / serotype 2a (strain ATCC 700532 / DSM 15464 / FAM18) protein is tRNA pseudouridine synthase A.